The sequence spans 5596 residues: Midasin (5596 aa).

An N-acetylmethionine modification is found at Met-1. 4 AAA-ATPase protomer regions span residues 307-591 (SVCK…TSKL), 659-978 (LIEQ…ASNP), 1048-1316 (KEPT…QEEI), and 1362-1616 (HIVW…NKMG). ATP is bound at residue 329–336 (GPIGCGKT). Residues 517–537 (SSVGCEQAPEEVSEARRENKR) form a disordered region. ATP-binding positions include 677–684 (GETGTGKT) and 1084–1091 (GETSVGKT). Phosphothreonine is present on Thr-1177. Residue 1390–1397 (GDTGCGKT) coordinates ATP. Residue Lys-1683 is modified to N6-acetyllysine. 2 AAA-ATPase protomer regions span residues 1738-1995 (RLLR…AVFK) and 2053-2313 (MKCV…IYIS). Residues 1753–1760 (GSPGVGKT) and 2066–2073 (GPASVGKT) each bind ATP. Ser-1754 carries the phosphoserine modification. The interval 2418-4691 (SLRAHETWGD…EGEGMKDVSD (2274 aa)) is linker. A disordered region spans residues 3989–4008 (LVESDKEEQPDFLPRPTDGA). Phosphothreonine is present on Thr-4212. Ser-4538 carries the post-translational modification Phosphoserine. 2 disordered regions span residues 4669–4688 (ATEF…GMKD) and 4700–5260 (EDTF…SRES). A compositionally biased stretch (basic and acidic residues) spans 4702–4724 (TFQKGQEKDKEDPDSKSDIKGED). Over residues 4741–4757 (ELEEQEEDDEKSDSEGG) the composition is skewed to acidic residues. Phosphoserine is present on residues Ser-4752 and Ser-4754. Residues 4758–4780 (DLDKHMGDLNGEEADKLDERLWG) are compositionally biased toward basic and acidic residues. A compositionally biased stretch (acidic residues) spans 4781–4794 (DDDEEEDEEEEDNK). Residues 4822–4834 (NKDKSQQDKKEEK) show a composition bias toward basic and acidic residues. Residues 4835–4844 (EEAEADDGGQ) show a composition bias toward acidic residues. Over residues 4845-4855 (GEDKINEQIDE) the composition is skewed to basic and acidic residues. Over residues 4877–4888 (EALDLPDDLNLD) the composition is skewed to acidic residues. Ser-4889 is subject to Phosphoserine. Positions 4896–4908 (EDTDNEEGEEENP) are enriched in acidic residues. Thr-4898 bears the Phosphothreonine mark. Basic and acidic residues predominate over residues 4909 to 4928 (LEIKEKPEEAGHEAEERGET). Residues Ser-4937 and Ser-4946 each carry the phosphoserine modification. Positions 4940 to 4966 (EPEEGPSEDDKAEGEEEMDTGADDQDG) are enriched in acidic residues. Basic and acidic residues predominate over residues 4968–4989 (AAQHPEEHSEEQQQSVEEKDKE). Over residues 5007–5021 (QEEEEREDSDTEEQV) the composition is skewed to acidic residues. At Ser-5015 the chain carries Phosphoserine. Positions 5033–5046 (CGQTGVENMQNTQA) are enriched in polar residues. Basic and acidic residues predominate over residues 5054-5064 (PEKEQGKEEHG). Over residues 5088–5101 (KHTRKNTQSFKRKP) the composition is skewed to basic residues. The segment covering 5105–5115 (DNERSMGDHNE) has biased composition (basic and acidic residues). Over residues 5132–5141 (QGPAQQPQAQ) the composition is skewed to low complexity. Positions 5181-5197 (QEEEEIEDTLMDTEEQE) are enriched in acidic residues. Composition is skewed to basic and acidic residues over residues 5198–5213 (EFKA…EEIK) and 5233–5260 (KTEE…SRES). A VWFA domain is found at 5384–5583 (QICLAIDDSS…ALPETLSDAL (200 aa)).

This sequence belongs to the midasin family. As to quaternary structure, associates with pre-60S ribosomes in the nucleoplasm. Interacts (via its hexameric AAA ATPase ring) with the PELP1 complex (via PELP1); the interaction is regulated by SUMO conjugation of PELP1 and is crucial for recruitment of MDN1 to the pre-ribosomal particle. Interacts (via VWFA/MIDAS domain) with WDR12 (via UBL domain). Interacts (via VWFA/MIDAS domain) with NLE1 (via UBL domain).

The protein localises to the nucleus. It is found in the nucleolus. It localises to the nucleoplasm. The protein resides in the cytoplasm. In terms of biological role, nuclear chaperone required for maturation and nuclear export of pre-60S ribosome subunits. Functions at successive maturation steps to remove ribosomal factors at critical transition points, first driving the exit of early pre-60S particles from the nucleolus and then driving late pre-60S particles from the nucleus. At an early stage in 60S maturation, mediates the dissociation of the PeBoW complex (PES1-BOP1-WDR12) from early pre-60S particles, rendering them competent for export from the nucleolus to the nucleoplasm. Subsequently recruited to the nucleoplasmic particles through interaction with SUMO-conjugated PELP1 complex. This binding is only possible if the 5S RNP at the central protuberance has undergone the rotation to complete its maturation. The protein is Midasin (MDN1) of Homo sapiens (Human).